Here is a 488-residue protein sequence, read N- to C-terminus: V-type proton ATPase subunit B 1 (488 aa).

This sequence belongs to the ATPase alpha/beta chains family. V-ATPase is a heteromultimeric enzyme composed of a peripheral catalytic V1 complex (main components: subunits A, B, C, D, E, and F) attached to an integral membrane V0 proton pore complex (main component: the proteolipid protein).

Its function is as follows. Non-catalytic subunit of the peripheral V1 complex of vacuolar ATPase. V-ATPase is responsible for acidifying a variety of intracellular compartments in eukaryotic cells. The sequence is that of V-type proton ATPase subunit B 1 from Hordeum vulgare (Barley).